Here is a 1802-residue protein sequence, read N- to C-terminus: Transposon Ty4-H Gag-Pol polyprotein (1802 aa).

Residues 39–115 (RKVSIKDEQV…IQLLETNENN (77 aa)) adopt a coiled-coil conformation. The ty4 protease stretch occupies residues 381–501 (NNNLSPVQNE…KTKMVLSRKY (121 aa)). D414 functions as the For protease activity; shared with dimeric partner in the catalytic mechanism. The integrase-type zinc finger-like stretch occupies residues 539-599 (AIKPTSSPGF…EPNEFWCQTC (61 aa)). In terms of domain architecture, Integrase catalytic spans 619 to 786 (TDHEPGSSWC…LPLKAISRQP (168 aa)). Mg(2+) is bound by residues D630 and D695. The interval 1223–1248 (KRKRKRHDKNNSLTSYELERDKKRSK) is disordered. The 136-residue stretch at 1375-1510 (RNMFMKTLDI…DILGMDLVYN (136 aa)) folds into the Reverse transcriptase Ty1/copia-type domain. Residues D1383, D1462, D1463, D1644, E1686, and D1720 each contribute to the Mg(2+) site. The RNase H Ty1/copia-type domain occupies 1644–1790 (DASVGSEYDA…KRFIQVLKNK (147 aa)).

As to quaternary structure, the protease is a homodimer, whose active site consists of two apposed aspartic acid residues. Post-translationally, proteolytically processed into capsid protein (CA), Ty4 protease (PR), integrase (IN) and reverse transcriptase/ribonuclease H (RT) proteins. Initially, virus-like particles (VLPs) are composed of the structural unprocessed proteins Gag and Gag-Pol, and also contain the host initiator methionine tRNA (tRNA(i)-Met) which serves as a primer for minus-strand DNA synthesis, and a dimer of genomic Ty RNA. Processing of the polyproteins occurs within the particle and proceeds by an ordered pathway, called maturation. First, the protease (PR) is released by autocatalytic cleavage of the Gag-Pol polyprotein, and this cleavage is a prerequisite for subsequent processing at the remaining sites to release the mature structural and catalytic proteins. Maturation takes place prior to the RT reaction and is required to produce transposition-competent VLPs.

The protein localises to the cytoplasm. Its subcellular location is the nucleus. It catalyses the reaction DNA(n) + a 2'-deoxyribonucleoside 5'-triphosphate = DNA(n+1) + diphosphate. The enzyme catalyses Endonucleolytic cleavage to 5'-phosphomonoester.. In terms of biological role, capsid protein (CA) is the structural component of the virus-like particle (VLP), forming the shell that encapsulates the retrotransposons dimeric RNA genome. Functionally, the aspartyl protease (PR) mediates the proteolytic cleavages of the Gag and Gag-Pol polyproteins after assembly of the VLP. Its function is as follows. Reverse transcriptase/ribonuclease H (RT) is a multifunctional enzyme that catalyzes the conversion of the retro-elements RNA genome into dsDNA within the VLP. The enzyme displays a DNA polymerase activity that can copy either DNA or RNA templates, and a ribonuclease H (RNase H) activity that cleaves the RNA strand of RNA-DNA heteroduplexes during plus-strand synthesis and hydrolyzes RNA primers. The conversion leads to a linear dsDNA copy of the retrotransposon that includes long terminal repeats (LTRs) at both ends. Integrase (IN) targets the VLP to the nucleus, where a subparticle preintegration complex (PIC) containing at least integrase and the newly synthesized dsDNA copy of the retrotransposon must transit the nuclear membrane. Once in the nucleus, integrase performs the integration of the dsDNA into the host genome. In Saccharomyces cerevisiae (strain ATCC 204508 / S288c) (Baker's yeast), this protein is Transposon Ty4-H Gag-Pol polyprotein (TY4B-H).